Reading from the N-terminus, the 890-residue chain is Genome polyprotein 2 (890 aa).

Positions 135–255 (AFNFAHGYCY…NSDLLNGIVG (121 aa)) constitute a Peptidase C6 domain. Catalysis depends on for helper component proteinase activity residues cysteine 143 and histidine 215. The tract at residues 506–533 (FTTSGDDDSPPPPGDSPSRPPGRSPDRV) is disordered. Over residues 515 to 528 (PPPPGDSPSRPPGR) the composition is skewed to pro residues. A coiled-coil region spans residues 788 to 816 (ELVQRSMTKLDKEIELFQAQIDSQRRAVT).

This sequence belongs to the bymoviruses polyprotein 2 family. Post-translationally, the viral RNA2 of bymoviruses is expressed as a single polyprotein which undergoes post-translational proteolytic processing resulting in the production of at least two individual proteins. The HC-pro cleaves its C-terminus autocatalytically (Potential).

The catalysed reaction is Hydrolyzes a Gly-|-Gly bond at its own C-terminus, commonly in the sequence -Tyr-Xaa-Val-Gly-|-Gly, in the processing of the potyviral polyprotein.. The protein is Genome polyprotein 2 of Hordeum vulgare (Barley).